Consider the following 172-residue polypeptide: Large ribosomal subunit protein bL17 (172 aa).

Residues 127-172 (KAAKQDRAKRVKGSKKVTGDVAPAVAPVPSAPAETQEEAKAPESAE) form a disordered region. Over residues 147–159 (VAPAVAPVPSAPA) the composition is skewed to low complexity. Residues 163–172 (EEAKAPESAE) show a composition bias toward basic and acidic residues.

This sequence belongs to the bacterial ribosomal protein bL17 family. In terms of assembly, part of the 50S ribosomal subunit. Contacts protein L32.

The sequence is that of Large ribosomal subunit protein bL17 from Chlorobium luteolum (strain DSM 273 / BCRC 81028 / 2530) (Pelodictyon luteolum).